We begin with the raw amino-acid sequence, 411 residues long: Imidazolonepropionase (411 aa).

Residues H75 and H77 each contribute to the Fe(3+) site. Zn(2+) contacts are provided by H75 and H77. The 4-imidazolone-5-propanoate site is built by R84, Y147, and H180. Y147 is a binding site for N-formimidoyl-L-glutamate. H245 contributes to the Fe(3+) binding site. Residue H245 participates in Zn(2+) binding. Residue Q248 participates in 4-imidazolone-5-propanoate binding. D320 lines the Fe(3+) pocket. D320 serves as a coordination point for Zn(2+). The N-formimidoyl-L-glutamate site is built by N322 and G324. T325 contacts 4-imidazolone-5-propanoate.

The protein belongs to the metallo-dependent hydrolases superfamily. HutI family. Zn(2+) serves as cofactor. Requires Fe(3+) as cofactor.

The protein localises to the cytoplasm. It catalyses the reaction 4-imidazolone-5-propanoate + H2O = N-formimidoyl-L-glutamate. It functions in the pathway amino-acid degradation; L-histidine degradation into L-glutamate; N-formimidoyl-L-glutamate from L-histidine: step 3/3. Its function is as follows. Catalyzes the hydrolytic cleavage of the carbon-nitrogen bond in imidazolone-5-propanoate to yield N-formimidoyl-L-glutamate. It is the third step in the universal histidine degradation pathway. This chain is Imidazolonepropionase, found in Photobacterium profundum (strain SS9).